Here is a 359-residue protein sequence, read N- to C-terminus: MGVLDKIKPGVVYGKELHFLYEICKKEGFAIPSINCIGTNSINAVLEAAKEINSPIMIQFSNSGSAFISGKGLKMEKPQGVSIVGAISGAMHVHLMAEHYGVPVVLHTDHCAKNLLPWVEGLLEYGEKYYSQHKKPLFSSHMLDLSEEPIKENIEISKKFLERMAKIEMFLEIELGITGGEEDGVDNSDRALHELFSTPEDIYYGYSELLKVSPNFQIAAAFGNVHGVYKPGNVKLTPKVLKDGQDYVISKTGVNMAKPVSYVFHGGSGSTIDEINEALSYGVVKMNIDTDTQWAAWEGVLNYYKKNESRLQGQLGDGKDIDIPNKKFYDPRVWLREAEVSMKDRVKIACKNLNNINRN.

S61 provides a ligand contact to D-glyceraldehyde 3-phosphate. The active-site Proton donor is D109. Zn(2+) is bound by residues H110, D144, E174, and H226. G227 contacts dihydroxyacetone phosphate. H265 serves as a coordination point for Zn(2+). Residues 266–268 (GGS) and 287–290 (NIDT) contribute to the dihydroxyacetone phosphate site.

The protein belongs to the class II fructose-bisphosphate aldolase family. Zn(2+) serves as cofactor.

It catalyses the reaction beta-D-fructose 1,6-bisphosphate = D-glyceraldehyde 3-phosphate + dihydroxyacetone phosphate. The protein operates within carbohydrate degradation; glycolysis; D-glyceraldehyde 3-phosphate and glycerone phosphate from D-glucose: step 4/4. In terms of biological role, catalyzes the aldol condensation of dihydroxyacetone phosphate (DHAP or glycerone-phosphate) with glyceraldehyde 3-phosphate (G3P) to form fructose 1,6-bisphosphate (FBP) in gluconeogenesis and the reverse reaction in glycolysis. The sequence is that of Fructose-bisphosphate aldolase (fba) from Borreliella burgdorferi (strain ATCC 35210 / DSM 4680 / CIP 102532 / B31) (Borrelia burgdorferi).